The primary structure comprises 1025 residues: Multidrug resistance protein MdtC (1025 aa).

Transmembrane regions (helical) follow at residues 3 to 23 (FFALFIYRPVATILLSVAITL), 333 to 353 (EVEQTLIISVALVILVVFLFL), 360 to 380 (IIPAVAVPVSLIGTFAAMYLC), 387 to 407 (LSLMALTIATGFVVDDAIVVL), 431 to 451 (VGFTVLSMSLSLVAVFLPLLL), 463 to 483 (FAVTLSVAIVISLLVSLTLTP), 528 to 548 (LVGVVLLGTIALNIWLYISIP), 853 to 873 (VILIIAAIATVYIVLGILYES), 875 to 895 (VHPLTILSTLPSAGVGALLAL), 897 to 917 (LFNAPFSLIALIGIMLLIGIV), 953 to 973 (PIMMTTLAALFGALPLVLSGG), and 984 to 1004 (ITIVGGLVMSQLLTLYTTPVV).

This sequence belongs to the resistance-nodulation-cell division (RND) (TC 2.A.6) family. MdtC subfamily. Part of a tripartite efflux system composed of MdtA, MdtB and MdtC. MdtC forms a heteromultimer with MdtB.

Its subcellular location is the cell inner membrane. Its function is as follows. The MdtABC tripartite complex confers resistance against novobiocin and deoxycholate. This chain is Multidrug resistance protein MdtC, found in Escherichia coli O139:H28 (strain E24377A / ETEC).